Here is a 562-residue protein sequence, read N- to C-terminus: Proton channel OTOP2 (562 aa).

Positions 1 to 20 (MSEELAQGPKESPPAPRAGP) are disordered. 12 helical membrane-spanning segments follow: residues 30–50 (LLSV…ISGG), 62–82 (VFAL…FYLL), 100–120 (PIWL…MDVF), 137–157 (ILHP…LWVS), 169–189 (TWCG…AAVV), 241–261 (FYLY…LYVM), 289–309 (FFAG…VFII), 324–344 (ALVI…LVSL), 371–391 (LLMG…VAVV), 402–422 (LNLT…MFII), 495–515 (DISL…AFGA), and 527–547 (FYGY…GIFY).

The protein belongs to the otopetrin family.

The protein localises to the cell membrane. It catalyses the reaction H(+)(in) = H(+)(out). With respect to regulation, actives at neutral and alkaline extracellular pH, acid extracellular pH appears to inhibit the channel. Insensitive to activation by Zn(2+). Its function is as follows. Proton-selective ion channel open at neutral pH. Actives at neutral and alkaline extracellular pH, likely participates in some alkali-related physiological activities. The chain is Proton channel OTOP2 from Homo sapiens (Human).